A 173-amino-acid chain; its full sequence is Large ribosomal subunit protein bL9 (173 aa).

A disordered region spans residues 150–173; that stretch reads KQEDKKSLSKKLNKADEQGERAEV.

The protein belongs to the bacterial ribosomal protein bL9 family.

Its function is as follows. Binds to the 23S rRNA. This Borreliella burgdorferi (strain ZS7) (Borrelia burgdorferi) protein is Large ribosomal subunit protein bL9.